We begin with the raw amino-acid sequence, 66 residues long: Large ribosomal subunit protein bL35 (66 aa).

The disordered stretch occupies residues 19-45; the sequence is SGKVVAAQSTKRHGMTKRSKRSLRTRR. A compositionally biased stretch (basic residues) spans 28–45; it reads TKRHGMTKRSKRSLRTRR.

Belongs to the bacterial ribosomal protein bL35 family.

The polypeptide is Large ribosomal subunit protein bL35 (Anaplasma phagocytophilum (strain HZ)).